A 208-amino-acid chain; its full sequence is Endo-1,4-beta-xylanase B (208 aa).

The first 16 residues, 1 to 16 (MKVTAAFAGLLATTLA), serve as a signal peptide directing secretion. Positions 17-207 (APATELVTRS…GTGTASVTVS (191 aa)) constitute a GH11 domain. Catalysis depends on Glu101, which acts as the Nucleophile. The active-site Proton donor is Glu194.

Belongs to the glycosyl hydrolase 11 (cellulase G) family.

Its subcellular location is the secreted. The catalysed reaction is Endohydrolysis of (1-&gt;4)-beta-D-xylosidic linkages in xylans.. The protein operates within glycan degradation; xylan degradation. With respect to regulation, N-bromosuccinimide completely inhibits the catalytic activity. Functionally, endo-1,4-beta-xylanase involved in the hydrolysis of xylan, a major structural heterogeneous polysaccharide found in plant biomass representing the second most abundant polysaccharide in the biosphere, after cellulose. This chain is Endo-1,4-beta-xylanase B (xynB), found in Talaromyces purpureogenus (Soft rot fungus).